Consider the following 294-residue polypeptide: Elongation factor Ts (294 aa).

The interval T78–V81 is involved in Mg(2+) ion dislocation from EF-Tu.

Belongs to the EF-Ts family.

The protein localises to the cytoplasm. Functionally, associates with the EF-Tu.GDP complex and induces the exchange of GDP to GTP. It remains bound to the aminoacyl-tRNA.EF-Tu.GTP complex up to the GTP hydrolysis stage on the ribosome. In Mycoplasma mobile (strain ATCC 43663 / 163K / NCTC 11711) (Mesomycoplasma mobile), this protein is Elongation factor Ts.